Consider the following 483-residue polypeptide: Chromosomal replication initiator protein DnaA (483 aa).

The domain I, interacts with DnaA modulators stretch occupies residues 1-71 (MKEFWQTCVS…EALAAEWYQR (71 aa)). The segment at 71–145 (RPVQVQFELP…DAANIVYERS (75 aa)) is domain II. A domain III, AAA+ region region spans residues 146–362 (RLNTDLTFEN…GALRKVLAYA (217 aa)). ATP contacts are provided by glycine 190, glycine 192, lysine 193, and threonine 194. Residues 363–483 (RFHGREALNV…LHVLEQTLKG (121 aa)) are domain IV, binds dsDNA.

The protein belongs to the DnaA family. Oligomerizes as a right-handed, spiral filament on DNA at oriC.

It localises to the cytoplasm. Plays an essential role in the initiation and regulation of chromosomal replication. ATP-DnaA binds to the origin of replication (oriC) to initiate formation of the DNA replication initiation complex once per cell cycle. Binds the DnaA box (a 9 base pair repeat at the origin) and separates the double-stranded (ds)DNA. Forms a right-handed helical filament on oriC DNA; dsDNA binds to the exterior of the filament while single-stranded (ss)DNA is stabiized in the filament's interior. The ATP-DnaA-oriC complex binds and stabilizes one strand of the AT-rich DNA unwinding element (DUE), permitting loading of DNA polymerase. After initiation quickly degrades to an ADP-DnaA complex that is not apt for DNA replication. Binds acidic phospholipids. This is Chromosomal replication initiator protein DnaA from Bordetella avium (strain 197N).